The primary structure comprises 339 residues: Glycerol-3-phosphate dehydrogenase [NAD(P)+] (339 aa).

NADPH-binding residues include serine 15, tyrosine 16, histidine 36, and lysine 110. Lysine 110, glycine 139, and threonine 141 together coordinate sn-glycerol 3-phosphate. Alanine 143 is an NADPH binding site. 5 residues coordinate sn-glycerol 3-phosphate: lysine 195, aspartate 248, serine 258, arginine 259, and asparagine 260. Residue lysine 195 is the Proton acceptor of the active site. Residue arginine 259 coordinates NADPH. NADPH contacts are provided by valine 283 and glutamate 285.

It belongs to the NAD-dependent glycerol-3-phosphate dehydrogenase family.

Its subcellular location is the cytoplasm. It carries out the reaction sn-glycerol 3-phosphate + NAD(+) = dihydroxyacetone phosphate + NADH + H(+). The catalysed reaction is sn-glycerol 3-phosphate + NADP(+) = dihydroxyacetone phosphate + NADPH + H(+). Its pathway is membrane lipid metabolism; glycerophospholipid metabolism. Functionally, catalyzes the reduction of the glycolytic intermediate dihydroxyacetone phosphate (DHAP) to sn-glycerol 3-phosphate (G3P), the key precursor for phospholipid synthesis. This is Glycerol-3-phosphate dehydrogenase [NAD(P)+] from Yersinia pseudotuberculosis serotype O:1b (strain IP 31758).